The sequence spans 66 residues: Beta-toxin Css6 (66 aa).

The 66-residue stretch at 1-66 folds into the LCN-type CS-alpha/beta domain; it reads KEGYLVNSYT…VWPLPNKTCN (66 aa). 4 disulfide bridges follow: cysteine 12–cysteine 65, cysteine 16–cysteine 41, cysteine 25–cysteine 46, and cysteine 29–cysteine 48. The residue at position 66 (asparagine 66) is an Asparagine amide.

This sequence belongs to the long (4 C-C) scorpion toxin superfamily. Sodium channel inhibitor family. Beta subfamily. Expressed by the venom gland.

It is found in the secreted. Its function is as follows. Beta toxins bind voltage-independently at site-4 of sodium channels (Nav) and shift the voltage of activation toward more negative potentials thereby affecting sodium channel activation and promoting spontaneous and repetitive firing. The chain is Beta-toxin Css6 from Centruroides suffusus (Durango bark scorpion).